The chain runs to 505 residues: 2,3-bisphosphoglycerate-independent phosphoglycerate mutase (505 aa).

The Mn(2+) site is built by aspartate 11 and serine 61. The active-site Phosphoserine intermediate is the serine 61. Residues histidine 122, arginine 152–aspartate 153, arginine 183, arginine 189, arginine 259–arginine 262, and lysine 332 contribute to the substrate site. 5 residues coordinate Mn(2+): aspartate 399, histidine 403, aspartate 440, histidine 441, and histidine 458.

Belongs to the BPG-independent phosphoglycerate mutase family. Monomer. It depends on Mn(2+) as a cofactor.

The enzyme catalyses (2R)-2-phosphoglycerate = (2R)-3-phosphoglycerate. Its pathway is carbohydrate degradation; glycolysis; pyruvate from D-glyceraldehyde 3-phosphate: step 3/5. In terms of biological role, catalyzes the interconversion of 2-phosphoglycerate and 3-phosphoglycerate. The protein is 2,3-bisphosphoglycerate-independent phosphoglycerate mutase of Flavobacterium johnsoniae (strain ATCC 17061 / DSM 2064 / JCM 8514 / BCRC 14874 / CCUG 350202 / NBRC 14942 / NCIMB 11054 / UW101) (Cytophaga johnsonae).